A 68-amino-acid chain; its full sequence is Protein transport protein Sec61 subunit gamma (68 aa).

Over 1-32 (MDQIMQFVEPSRQFVKDSIRLVKRCTKPDRKE) the chain is Cytoplasmic. A helical transmembrane segment spans residues 33 to 61 (FQKIAMATAIGFAIMGFIGFFVKLIHIPI). At 62–68 (NNIIVGG) the chain is on the extracellular side.

Belongs to the SecE/SEC61-gamma family. In terms of assembly, the SEC61 channel-forming translocon complex consists of channel-forming core components SEC61A1, SEC61B and SEC61G and different auxiliary components such as SEC62 and SEC63. The SEC61 channel associates with the multi-pass translocon (MPT) complex.

It is found in the endoplasmic reticulum membrane. Its function is as follows. Component of SEC61 channel-forming translocon complex that mediates transport of signal peptide-containing precursor polypeptides across the endoplasmic reticulum (ER). Forms a ribosome receptor and a gated pore in the ER membrane, both functions required for cotranslational translocation of nascent polypeptides. The SEC61 channel is also involved in ER membrane insertion of transmembrane proteins: it mediates membrane insertion of the first few transmembrane segments of proteins, while insertion of subsequent transmembrane regions of multi-pass membrane proteins is mediated by the multi-pass translocon (MPT) complex. This chain is Protein transport protein Sec61 subunit gamma (sec61g), found in Gadus morhua (Atlantic cod).